Here is a 67-residue protein sequence, read N- to C-terminus: Preprofallaxidin-4 (67 aa).

Positions 1–22 are cleaved as a signal peptide; it reads MASLKKFLFLVLFLGMVSLSIC. Residues 23–46 constitute a propeptide that is removed on maturation; that stretch reads DKEKREGENEEEEEEHEEESEEKR. The tract at residues 24–48 is disordered; it reads KEKREGENEEEEEEHEEESEEKRGL. Residues 30–42 are compositionally biased toward acidic residues; the sequence is ENEEEEEEHEEES.

The protein belongs to the frog skin active peptide (FSAP) family. Dermaseptin subfamily. In terms of tissue distribution, expressed by the skin glands.

The protein localises to the secreted. The protein is Preprofallaxidin-4 of Litoria fallax (Eastern dwarf tree frog).